Consider the following 313-residue polypeptide: Protein-glutamine deamidase Cif (313 aa).

Residues Cys128, His186, and Gln205 contribute to the active site.

It belongs to the Cif family.

The protein localises to the secreted. It localises to the host nucleus. The catalysed reaction is L-glutaminyl-[protein] + H2O = L-glutamyl-[protein] + NH4(+). Functionally, protein-glutamine deamidase effector that inhibits the host cell cycle and other key cellular processes such as the actin network and programmed-cell death. Acts by mediating the side chain deamidation of 'Gln-40' of host NEDD8, converting it to glutamate, thereby abolishing the activity of cullin-RING-based E3 ubiquitin-protein ligase complexes (CRL complexes). Inactivation of CRL complexes prevents ubiquitination and subsequent degradation of the cyclin-dependent kinase inhibitors CDKN1A/p21 and CDKN1B/p27, leading to G1 and G2 cell cycle arrests in host cells. Deamidation of 'Gln-40' of host NEDD8 also triggers macrophage-specific programmed cell death. Also able to catalyze deamidation of 'Gln-40' of host ubiquitin in vitro; however, NEDD8 constitutes the preferred substrate in vivo. The protein is Protein-glutamine deamidase Cif of Photorhabdus laumondii subsp. laumondii (strain DSM 15139 / CIP 105565 / TT01) (Photorhabdus luminescens subsp. laumondii).